The chain runs to 543 residues: Probable E3 ubiquitin-protein ligase ARI9 (543 aa).

Residues 1-26 (MDFSDDDMIDNKSGEENYSYGGGNES) are disordered. The interval 124 to 332 (VNIQCGICFE…RHSGACNRFV (209 aa)) is TRIAD supradomain. The Zn(2+) site is built by Cys-128, Cys-131, Cys-145, His-147, Cys-150, Cys-153, Cys-173, Cys-178, Cys-217, Cys-222, Cys-240, Cys-242, Cys-247, Cys-250, His-255, Cys-260, Cys-287, and Cys-290. The segment at 128-178 (CGICFESYTREEIARVSCGHPYCKTCWAGYITTKIEDGPGCLRVKCPEPSC) adopts an RING-type 1 zinc-finger fold. Residues 197–260 (EKYSRYILRS…SEDAHSPVDC (64 aa)) form an IBR-type zinc finger. The RING-type 2; atypical zinc-finger motif lies at 287-317 (CPECKRPIEKNDGCNHMTCSAPCGHEFCWIC). Cys-300 is an active-site residue. Zn(2+) is bound by residues Cys-305, Cys-309, Cys-314, Cys-317, His-324, and Cys-328.

Belongs to the RBR family. Ariadne subfamily. Requires Zn(2+) as cofactor.

The catalysed reaction is [E2 ubiquitin-conjugating enzyme]-S-ubiquitinyl-L-cysteine + [acceptor protein]-L-lysine = [E2 ubiquitin-conjugating enzyme]-L-cysteine + [acceptor protein]-N(6)-ubiquitinyl-L-lysine.. It functions in the pathway protein modification; protein ubiquitination. Its function is as follows. Might act as an E3 ubiquitin-protein ligase, or as part of E3 complex, which accepts ubiquitin from specific E2 ubiquitin-conjugating enzymes and then transfers it to substrates. The sequence is that of Probable E3 ubiquitin-protein ligase ARI9 (ARI9) from Arabidopsis thaliana (Mouse-ear cress).